Reading from the N-terminus, the 50-residue chain is Large ribosomal subunit protein eL39 (50 aa).

A compositionally biased stretch (basic residues) spans 1–12 (MGKKSKASKKRL). 2 disordered regions span residues 1–20 (MGKKSKASKKRLAKLERQNS) and 30–50 (TNRDVQRNPKRRNWRRNDTDE).

This sequence belongs to the eukaryotic ribosomal protein eL39 family.

The chain is Large ribosomal subunit protein eL39 (rpl39e) from Halobacterium salinarum (strain ATCC 700922 / JCM 11081 / NRC-1) (Halobacterium halobium).